The sequence spans 262 residues: Cutinase 1 (262 aa).

Tyrosine 61 contacts poly(ethylene terephthalate). Serine 131 acts as the Nucleophile in catalysis. Poly(ethylene terephthalate) is bound by residues methionine 132 and tryptophan 156. Residues aspartate 177 and histidine 209 each act as charge relay system in the active site. A disulfide bridge links cysteine 242 with cysteine 260.

Belongs to the AB hydrolase superfamily.

The protein resides in the secreted. It localises to the periplasm. The enzyme catalyses (ethylene terephthalate)(n) + H2O = (ethylene terephthalate)(n-1) + 4-[(2-hydroxyethoxy)carbonyl]benzoate + H(+). It carries out the reaction a butanoate ester + H2O = an aliphatic alcohol + butanoate + H(+). It catalyses the reaction an acetyl ester + H2O = an aliphatic alcohol + acetate + H(+). The catalysed reaction is cutin + H2O = cutin monomers.. Its function is as follows. Catalyzes the hydrolysis of cutin, a polyester that forms the structure of plant cuticle. Shows esterase activity towards p-nitrophenol-linked aliphatic esters (pNP-aliphatic esters). Capable of degrading the plastic poly(ethylene terephthalate) (PET), the most abundant polyester plastic in the world. Capable of degrading the bioplastic poly(lactic acid) (PLLA). In Thermobifida cellulosilytica, this protein is Cutinase 1.